We begin with the raw amino-acid sequence, 301 residues long: WD repeat-containing protein SL1-17 (301 aa).

7 WD repeats span residues 11–54 (AHKE…LKCL), 59–98 (GHRL…LTKT), 101–140 (GDPA…KEGS), 143–182 (LEGK…VQFL), 184–223 (GHAT…LVIP), 227–266 (GHKG…EKHC), and 269–300 (THED…IYQC).

This Schistosoma mansoni (Blood fluke) protein is WD repeat-containing protein SL1-17.